The following is a 573-amino-acid chain: Protein FAM200A (573 aa).

The segment at 1–51 (MTPESRDTTDLSPGGTQEMEGIVIVKVEEEDEEDHFQKERNKVESSPQVLS) is disordered. At 1–513 (MTPESRDTTD…DDFPLLSRKS (513 aa)) the chain is on the extracellular side. Residues 514 to 533 (ILLLLPFTTTYLCELGFSIL) form a helical membrane-spanning segment. Residues 534 to 573 (TRLKTKKRNRLNSAPDMRVALSSCVPDWKELMNRQAHPSH) are Cytoplasmic-facing.

It belongs to the FAM200 family.

It is found in the membrane. The polypeptide is Protein FAM200A (FAM200A) (Homo sapiens (Human)).